The chain runs to 364 residues: Anhydro-N-acetylmuramic acid kinase (364 aa).

Gly11 to Asp18 is an ATP binding site.

This sequence belongs to the anhydro-N-acetylmuramic acid kinase family.

The catalysed reaction is 1,6-anhydro-N-acetyl-beta-muramate + ATP + H2O = N-acetyl-D-muramate 6-phosphate + ADP + H(+). The protein operates within amino-sugar metabolism; 1,6-anhydro-N-acetylmuramate degradation. Its pathway is cell wall biogenesis; peptidoglycan recycling. Its function is as follows. Catalyzes the specific phosphorylation of 1,6-anhydro-N-acetylmuramic acid (anhMurNAc) with the simultaneous cleavage of the 1,6-anhydro ring, generating MurNAc-6-P. Is required for the utilization of anhMurNAc either imported from the medium or derived from its own cell wall murein, and thus plays a role in cell wall recycling. This is Anhydro-N-acetylmuramic acid kinase from Pseudomonas syringae pv. syringae (strain B728a).